We begin with the raw amino-acid sequence, 84 residues long: Beta-defensin 119 (84 aa).

Positions 1–21 (MKLLYLFLAILLAIEEPVISG) are cleaved as a signal peptide. 3 disulfide bridges follow: Cys28–Cys55, Cys35–Cys49, and Cys39–Cys56.

It belongs to the beta-defensin family. In terms of tissue distribution, abundant expression in the male reproductive tract only. Abundant expressed in testis and the caput region of epididymis, but low in the corpus region.

The protein resides in the secreted. In terms of biological role, has antibacterial activity. This Homo sapiens (Human) protein is Beta-defensin 119 (DEFB119).